A 293-amino-acid chain; its full sequence is MVWRTLGASNFSTCPNGSVQWIWDVFGECAQDGWDEASVGLGLVSILCFAASTFPQYIKACKTGNMDQALSLWFLLGWIGGDSCNLIGSFLADQLPLQTYTAVYYVLADLMMLTLYFHYKFKKRPSPLSAPINSVLLFILGTVCITPLLSSTDPVAVPREGFRGRTLLSVEPGNKPFTKKEVIGFVIGSASSLLYLLSRLPQIRTNFIRQSTQGISYSLFALVMLGNTLYGLSVLLKNPEVGQSEGSYLLHHLPWLVGSLGVLLLDTIISIQFLVYRSHETAAASEREPLLPS.

At 1 to 37 the chain is on the lumenal side; that stretch reads MVWRTLGASNFSTCPNGSVQWIWDVFGECAQDGWDEA. Asn-10 and Asn-16 each carry an N-linked (GlcNAc...) asparagine glycan. The region spanning 34–100 is the PQ-loop 1 domain; the sequence is WDEASVGLGL…LADQLPLQTY (67 aa). The chain crosses the membrane as a helical span at residues 38–58; the sequence is SVGLGLVSILCFAASTFPQYI. The Cytoplasmic portion of the chain corresponds to 59-71; that stretch reads KACKTGNMDQALS. A helical transmembrane segment spans residues 72 to 92; that stretch reads LWFLLGWIGGDSCNLIGSFLA. The Lumenal portion of the chain corresponds to 93–96; it reads DQLP. Residues 97–117 form a helical membrane-spanning segment; sequence LQTYTAVYYVLADLMMLTLYF. Over 118 to 127 the chain is Cytoplasmic; sequence HYKFKKRPSP. The helical transmembrane segment at 128 to 148 threads the bilayer; the sequence is LSAPINSVLLFILGTVCITPL. At 149–182 the chain is on the lumenal side; the sequence is LSSTDPVAVPREGFRGRTLLSVEPGNKPFTKKEV. Residues 183-203 form a helical membrane-spanning segment; that stretch reads IGFVIGSASSLLYLLSRLPQI. The PQ-loop 2 domain maps to 191-243; it reads SSLLYLLSRLPQIRTNFIRQSTQGISYSLFALVMLGNTLYGLSVLLKNPEVGQ. Topologically, residues 204–214 are cytoplasmic; that stretch reads RTNFIRQSTQG. Residues 215–235 form a helical membrane-spanning segment; it reads ISYSLFALVMLGNTLYGLSVL. The Lumenal segment spans residues 236–254; sequence LKNPEVGQSEGSYLLHHLP. A helical transmembrane segment spans residues 255–275; that stretch reads WLVGSLGVLLLDTIISIQFLV. Residues 276-293 lie on the Cytoplasmic side of the membrane; it reads YRSHETAAASEREPLLPS. A Di-leucine motif motif is present at residues 290-291; that stretch reads LL.

It belongs to the laat-1 family. In terms of tissue distribution, ubiquitously expressed.

Its subcellular location is the lysosome membrane. Its function is as follows. Amino acid transporter that specifically mediates the pH-dependent export of the cationic amino acids arginine, histidine and lysine from lysosomes. The protein is Lysosomal amino acid transporter 1 homolog of Mus musculus (Mouse).